Consider the following 580-residue polypeptide: Isochorismate synthase, chloroplastic (580 aa).

Residues methionine 1–valine 91 constitute a chloroplast transit peptide.

Belongs to the isochorismate synthase family. Mg(2+) is required as a cofactor.

The protein localises to the plastid. It is found in the chloroplast. It carries out the reaction chorismate = isochorismate. Not inhibited by Tyr, Phe or Trp. Involved in the synthesis of o-succinylbenzoic acid, 2,3-dihydroxybenzoic acid and salicylic acid (SA). This is Isochorismate synthase, chloroplastic from Catharanthus roseus (Madagascar periwinkle).